Consider the following 258-residue polypeptide: Deoxyribose-phosphate aldolase (258 aa).

D101 (proton donor/acceptor) is an active-site residue. The active-site Schiff-base intermediate with acetaldehyde is the K166. The active-site Proton donor/acceptor is K200.

The protein belongs to the DeoC/FbaB aldolase family. DeoC type 2 subfamily.

Its subcellular location is the cytoplasm. It carries out the reaction 2-deoxy-D-ribose 5-phosphate = D-glyceraldehyde 3-phosphate + acetaldehyde. It functions in the pathway carbohydrate degradation; 2-deoxy-D-ribose 1-phosphate degradation; D-glyceraldehyde 3-phosphate and acetaldehyde from 2-deoxy-alpha-D-ribose 1-phosphate: step 2/2. Functionally, catalyzes a reversible aldol reaction between acetaldehyde and D-glyceraldehyde 3-phosphate to generate 2-deoxy-D-ribose 5-phosphate. This chain is Deoxyribose-phosphate aldolase, found in Actinobacillus pleuropneumoniae serotype 3 (strain JL03).